The chain runs to 48 residues: DNA-directed RNA polymerase subunit Rpo12 (48 aa).

C9, C26, and C29 together coordinate Zn(2+).

This sequence belongs to the archaeal Rpo12/eukaryotic RPC10 RNA polymerase subunit family. Part of the RNA polymerase complex. It depends on Zn(2+) as a cofactor.

The protein localises to the cytoplasm. The enzyme catalyses RNA(n) + a ribonucleoside 5'-triphosphate = RNA(n+1) + diphosphate. Its function is as follows. DNA-dependent RNA polymerase (RNAP) catalyzes the transcription of DNA into RNA using the four ribonucleoside triphosphates as substrates. This is DNA-directed RNA polymerase subunit Rpo12 from Saccharolobus islandicus (strain Y.N.15.51 / Yellowstone #2) (Sulfolobus islandicus).